Reading from the N-terminus, the 97-residue chain is U-scoloptoxin(10)-Ssd2a (97 aa).

A signal peptide spans 1 to 23; sequence MNKSMLIFFTILFLTYIIEEKEA.

Contains 3 disulfide bonds. Expressed by the venom gland.

It is found in the secreted. This chain is U-scoloptoxin(10)-Ssd2a, found in Scolopendra dehaani (Thai centipede).